The chain runs to 141 residues: Hemoglobin subunit alpha-D (141 aa).

In terms of domain architecture, Globin spans 1 to 141 (MLSADDKKII…VAAVLAEKYR (141 aa)). The heme b site is built by His-58 and His-87.

Belongs to the globin family. Heterotetramer of two alpha-D chains and two beta chains. Red blood cells.

In terms of biological role, involved in oxygen transport from the lung to the various peripheral tissues. In Anser indicus (Bar-headed goose), this protein is Hemoglobin subunit alpha-D (HBAD).